A 103-amino-acid chain; its full sequence is Small ribosomal subunit protein uS10 (103 aa).

It belongs to the universal ribosomal protein uS10 family. In terms of assembly, part of the 30S ribosomal subunit.

Involved in the binding of tRNA to the ribosomes. The polypeptide is Small ribosomal subunit protein uS10 (Sulfurovum sp. (strain NBC37-1)).